Here is a 129-residue protein sequence, read N- to C-terminus: N16.2 matrix protein (129 aa).

The signal sequence occupies residues 1-23 (MKCTLRWTITALVLLGICHLARP). 5 tandem repeats follow at residues 91–92 (NG), 93–94 (NG), 95–96 (DG), 97–98 (NG), and 99–100 (NG). The interval 91–100 (NGNGDGNGNG) is 5 X 2 AA tandem repeats of N-G.

The protein belongs to the N16 matrix protein family. In terms of assembly, heterooligomer; disulfide-linked. Pif97, Pif80, N16 and other proteins form a complex. In terms of tissue distribution, component of conchiolin, the organic matrix of nacre. Expressed at extremely high levels in the dorsal region of the mantle, which region may be responsible for the nacreous layer formation, but only in trace amounts at the mantle edge, which region may be responsible for the prismatic layer formation.

Its subcellular location is the secreted. It is found in the extracellular space. The protein localises to the extracellular matrix. Its function is as follows. May be specifically involved in the formation of the nacreous layer. In Pinctada fucata (Akoya pearl oyster), this protein is N16.2 matrix protein.